The sequence spans 475 residues: ATP synthase subunit beta (475 aa).

An ATP-binding site is contributed by Gly-160–Thr-167.

Belongs to the ATPase alpha/beta chains family. F-type ATPases have 2 components, CF(1) - the catalytic core - and CF(0) - the membrane proton channel. CF(1) has five subunits: alpha(3), beta(3), gamma(1), delta(1), epsilon(1). CF(0) has three main subunits: a(1), b(2) and c(9-12). The alpha and beta chains form an alternating ring which encloses part of the gamma chain. CF(1) is attached to CF(0) by a central stalk formed by the gamma and epsilon chains, while a peripheral stalk is formed by the delta and b chains.

The protein resides in the cell membrane. It carries out the reaction ATP + H2O + 4 H(+)(in) = ADP + phosphate + 5 H(+)(out). Functionally, produces ATP from ADP in the presence of a proton gradient across the membrane. The catalytic sites are hosted primarily by the beta subunits. This is ATP synthase subunit beta from Mycolicibacterium vanbaalenii (strain DSM 7251 / JCM 13017 / BCRC 16820 / KCTC 9966 / NRRL B-24157 / PYR-1) (Mycobacterium vanbaalenii).